Here is a 698-residue protein sequence, read N- to C-terminus: Effector protein AvrPphDPgy (698 aa).

Positions 1–15 (MNPLRSIQHNITTPP) are enriched in polar residues. Disordered stretches follow at residues 1–36 (MNPLRSIQHNITTPPISGGQPLDAVGPQAQQSHPKR) and 171–200 (VDSSSPLLSSPDHSRPPSQHIGSVRRDSDS). A compositionally biased stretch (low complexity) spans 172 to 181 (DSSSPLLSSP).

The protein localises to the secreted. Its function is as follows. Effector protein involved in non-host recognition. In Pseudomonas savastanoi pv. glycinea (Pseudomonas syringae pv. glycinea), this protein is Effector protein AvrPphDPgy (avrPphDPgy).